Consider the following 1793-residue polypeptide: MSGPTKLVFFGNEFPNDDLKALFRGLHRHGKDRRFRQLATFLEESTRVLQNEVAQLPEPLKKLVPHFENLMPLTEVDFRQGPLGAAMESALLTILELGMFIGHYEAEERVWDLSADRTTLAGLSIGLLAAAGVALSTHLAEVVQNGAECVRVSFRLGVYVHDISRKLEAPQADGSLLSWAHVVTGETASDLQEELSRYNTETGTPELLKVFISAADKTSVSVSGPPSRIRAAFRASQRLRYSKSLALPVYDGLCHAAHLYDEETIHRVLHPDGSVIPTSRPVQLALLSSRSGQPFEATTAAELFRAISTELLTGTIFLDNITAGILDRTERCADAPQCQIETYRTSLVFKGLLKALEACFPDRTISTTDLIPWVFQDYGARQPKSYADSKLAIVGMACRMPGGANDLDLFWELLAQGRDTHTTVPADRFDLETHYDPTGETENATRTPFGNFIDQPGLFDAGFFNMSPREAEQTDPMHRLALVTAYEALEMAGIVSGRTPSSNPKRIATFYGQASDDWRELNASQNIGTYAVPGGERAFANGRINYFFKFGGPSFNLDTACSSGLAAVQAACSALWAGEADTVLAGGLNIITDPDNYAGLGNGHFLSRTGQCKVWDQSADGYCRADGVGSVVIKRLEDAEADNDNILAVVLSAATNHSAEAISITHPHAGAQKENYTQVLHQAAVNPLDISYVELHGTGTQAGDAQEAESVLDIFAPRAHRRRADQPLHLGAVKSNIGHGEAAAGIASLLKVLLMYQKNEIPAHIGIPTVINPAIPTDLEQRQVYLPRTKTAWPRAAGQIRRAIVNSFGAHGGNTTLVLEDAPEKQVTVAREERSTHPVVISAKSKKSLAANVETLLAYLDENPETDLGDLSYTTCARRMHHSWRLATAVSDIPALQKFLRNAVSNDAVSQTRPIPTEAPHVVFTFTGQGAYYAGLAQGLFQALPFFRAEVRQLDHLSQRLGFPSIVPVILGEVEEGTATALVTQLSIVIVEIALARLWLLLLGIPAPHAVIGHSLGEYAALAVAGVLSTADALYLVGHRAQLIEEHCTPGSHAMLSVRATIADIERLVGTGADAPTYELSCQNTHQDTVIGGSIQDLNAIREKLEPEGIKCVNVDVPFAFHTAQMDAVRERLAKAVAAVPFKTPSVPVLSPLLGSVVFDGKSINPEYIVRATREPVRFATAIDAAQELGIVNSQTLWVDIGPHPICASFVRSLVPGARIVSSCRRNEDNFATMAKSLCTLHLAGRTPSWAEYFRPDEQAYSLLRLPKYRWNEVNYWIQYLGTWTLDKAHLKNGGSQKRTITDVPSVSSLRTSLIHQVTEETVDKTTATLKAISDIQHPDFLEAVHGHTMNNCGVATSSIWTDMAMTVGEHLYRRLVPGTDHVLMDLCDFEVQHAQVANTNSNTPQPLALEAHLDLPTRHMSLAWYDVNATTNQRADAPFATGSIKYPADPTGAAWSIEWSRITHLIQGRIEALQHLAAENKASTLSKPLAYALFKNVVDYAPRYRGMDRVVIHDHEAFSDITLTTDRHGTWHTPPHWIDSVSHLAGLVMNGSDASNTRDFFYVTPGCGSCRMTEPLIAGGKYRNYVRMFPMPDEAHMYAGDLYILREDKIIGVVEQLKFRRVPRLLMDRFFSPNKNAAAHAAPAPAPAAVPAVKKQPPTETIQPQAPKTEQKQDQLQLPNLASAAPSTANSSSSPSSSGVATPTTEQEAPVADASAVTGVAGKCLELIANETGLGVAELTADATFVQLGVDSLMSLVLSEKLRSEMGLEIKSSLFLECPTVGDLTGWLEQYC.

Residues 16 to 250 (NDDLKALFRG…YSKSLALPVY (235 aa)) form an N-terminal acylcarrier protein transacylase domain (SAT) region. One can recognise a Ketosynthase family 3 (KS3) domain in the interval 388–821 (DSKLAIVGMA…GGNTTLVLED (434 aa)). Active-site for beta-ketoacyl synthase activity residues include Cys561, His696, and His739. The interval 923 to 1245 (VFTFTGQGAY…KSLCTLHLAG (323 aa)) is malonyl-CoA:ACP transacylase (MAT) domain. Positions 1312 to 1634 (TSLIHQVTEE…RLLMDRFFSP (323 aa)) are product template (PT) domain. The N-terminal hotdog fold stretch occupies residues 1316–1452 (HQVTEETVDK…GSIKYPADPT (137 aa)). One can recognise a PKS/mFAS DH domain in the interval 1316 to 1629 (HQVTEETVDK…FRRVPRLLMD (314 aa)). The Proton acceptor; for dehydratase activity role is filled by His1348. The interval 1482–1629 (KASTLSKPLA…FRRVPRLLMD (148 aa)) is C-terminal hotdog fold. The active-site Proton donor; for dehydratase activity is the Asp1540. A compositionally biased stretch (low complexity) spans 1642–1659 (AAPAPAPAAVPAVKKQPP). The interval 1642 to 1714 (AAPAPAPAAV…TTEQEAPVAD (73 aa)) is disordered. The span at 1660 to 1681 (TETIQPQAPKTEQKQDQLQLPN) shows a compositional bias: polar residues. The span at 1683–1706 (ASAAPSTANSSSSPSSSGVATPTT) shows a compositional bias: low complexity. In terms of domain architecture, Carrier spans 1716–1793 (SAVTGVAGKC…DLTGWLEQYC (78 aa)). O-(pantetheine 4'-phosphoryl)serine is present on Ser1753.

Requires pantetheine 4'-phosphate as cofactor.

The enzyme catalyses holo-[ACP] + 9 malonyl-CoA + acetyl-CoA + 9 H(+) = 3-(2,4-dioxopentyl)-3,6,8,9-tetrahydroxy-1-oxo-1,2,3,4-tetrahydroanthracene-2-carboxyl-[ACP] + 9 CO2 + 10 CoA + 2 H2O. The protein operates within secondary metabolite biosynthesis. Its function is as follows. Non-reducing polyketide synthase; part of the gene cluster that mediates the biosynthesis of the linear tetracyclic TAN-1612 neuropeptide Y receptor antagonist. The decaketide backbone of TAN-1612 is synthesized by the non-reducing polyketide synthase adaA via condensation of one acetyl-CoA starter unit with 9 malonyl-CoA units. The FAD-dependent monooxygenase adaC then performs hydroxylation at C2 while the polaketide chain is still attached to the NRPKS adaA. The alpha-hydroxylation step at C2 appears to be crucial for the following C18-C1 Claisen cyclization and release of the C9-hydroxyl version of TAN-1612 from the NRPKS adaA, two steps performed by the lactamase-like protein adaB. Finally, the O-methyltransferase adaD performs the C9 O-methylation to complete the biosynthesis of TAN-1612. In Aspergillus niger (strain ATCC MYA-4892 / CBS 513.88 / FGSC A1513), this protein is Non-reducing polyketide synthase adaA.